Consider the following 526-residue polypeptide: D-arabinono-1,4-lactone oxidase (526 aa).

The FAD-binding PCMH-type domain maps to 22–196; that stretch reads FWSRPSLYFQ…VYATLRTVPA (175 aa). At H59 the chain carries Pros-8alpha-FAD histidine.

It belongs to the oxygen-dependent FAD-linked oxidoreductase family. FAD is required as a cofactor.

It is found in the mitochondrion membrane. The enzyme catalyses D-arabinono-1,4-lactone + O2 = dehydro-D-arabinono-1,4-lactone + H2O2 + H(+). The protein operates within cofactor biosynthesis; D-erythroascorbate biosynthesis; dehydro-D-arabinono-1,4-lactone from D-arabinose: step 2/2. The protein is D-arabinono-1,4-lactone oxidase (ALO1) of Yarrowia lipolytica (strain CLIB 122 / E 150) (Yeast).